A 102-amino-acid polypeptide reads, in one-letter code: Large ribosomal subunit protein bL28 (102 aa).

Residues Met-1–His-20 form a disordered region.

The protein belongs to the bacterial ribosomal protein bL28 family.

The sequence is that of Large ribosomal subunit protein bL28 from Bradyrhizobium sp. (strain BTAi1 / ATCC BAA-1182).